The chain runs to 285 residues: tRNA uridine(34) hydroxylase (285 aa).

The region spanning 130 to 225 (RGDDVVFFDG…YGEAFGDTGL (96 aa)) is the Rhodanese domain. Cys185 serves as the catalytic Cysteine persulfide intermediate.

It belongs to the TrhO family.

It catalyses the reaction uridine(34) in tRNA + AH2 + O2 = 5-hydroxyuridine(34) in tRNA + A + H2O. In terms of biological role, catalyzes oxygen-dependent 5-hydroxyuridine (ho5U) modification at position 34 in tRNAs. This chain is tRNA uridine(34) hydroxylase, found in Rhodococcus jostii (strain RHA1).